Consider the following 152-residue polypeptide: Siroheme decarboxylase beta subunit (152 aa).

It belongs to the Ahb/Nir family. Forms a heterodimer composed of AhbA and AhbB.

The catalysed reaction is siroheme + 2 H(+) = 12,18-didecarboxysiroheme + 2 CO2. It functions in the pathway porphyrin-containing compound metabolism; protoheme biosynthesis. With respect to regulation, binds heme b. The redox state of the heme b modulates the activity of the enzyme. Activity is stimulated by sodium dithionite. In terms of biological role, involved in siroheme-dependent heme b biosynthesis. Catalyzes the decarboxylation of siroheme into didecarboxysiroheme. The sequence is that of Siroheme decarboxylase beta subunit from Methanosarcina barkeri (strain Fusaro / DSM 804).